Here is a 311-residue protein sequence, read N- to C-terminus: tRNA dimethylallyltransferase (311 aa).

Residue 11–18 (GPTASGKS) coordinates ATP. 13-18 (TASGKS) is a substrate binding site. Interaction with substrate tRNA regions lie at residues 36 to 39 (DSMQ) and 160 to 164 (QRLIR).

Belongs to the IPP transferase family. Monomer. The cofactor is Mg(2+).

It carries out the reaction adenosine(37) in tRNA + dimethylallyl diphosphate = N(6)-dimethylallyladenosine(37) in tRNA + diphosphate. Its function is as follows. Catalyzes the transfer of a dimethylallyl group onto the adenine at position 37 in tRNAs that read codons beginning with uridine, leading to the formation of N6-(dimethylallyl)adenosine (i(6)A). The sequence is that of tRNA dimethylallyltransferase from Rickettsia typhi (strain ATCC VR-144 / Wilmington).